The chain runs to 397 residues: Enoyl-[acyl-carrier-protein] reductase [NADH] (397 aa).

Residues 48–53, 74–75, 111–112, and 139–140 contribute to the NAD(+) site; these read GASTGY, FE, DA, and VA. Residue tyrosine 225 coordinates substrate. The active-site Proton donor is tyrosine 235. Residues lysine 244 and 273-275 contribute to the NAD(+) site; that span reads VVT.

This sequence belongs to the TER reductase family. Monomer.

It catalyses the reaction a 2,3-saturated acyl-[ACP] + NAD(+) = a (2E)-enoyl-[ACP] + NADH + H(+). Its pathway is lipid metabolism; fatty acid biosynthesis. Its function is as follows. Involved in the final reduction of the elongation cycle of fatty acid synthesis (FAS II). Catalyzes the reduction of a carbon-carbon double bond in an enoyl moiety that is covalently linked to an acyl carrier protein (ACP). This is Enoyl-[acyl-carrier-protein] reductase [NADH] from Burkholderia pseudomallei (strain 668).